A 295-amino-acid chain; its full sequence is Putative aquaporin-12A (295 aa).

The helical transmembrane segment at 1–21 (MAGLNVSLSFFFATFALCEAA) threads the bilayer. The Extracellular portion of the chain corresponds to 22–54 (RRASKALLPVGAYEVFAREAMRTLVELGPWAGD). The chain crosses the membrane as a helical span at residues 55 to 75 (FGPDLLLTLLFLLFLAHGVTL). At 76 to 99 (DGASANPTVSLQEFLMAEQSLPGT) the chain is on the cytoplasmic side. The discontinuously helical intramembrane region spans 77-114 (GASANPTVSLQEFLMAEQSLPGTLLKLAAQGLGMQAAC). The NPA 1 signature appears at 81–83 (NPT). A helical transmembrane segment spans residues 100 to 126 (LLKLAAQGLGMQAACTLMRLCWAWELS). Over 127–145 (DLHLLQSLMAQSCSSALRT) the chain is Extracellular. Residues 146–166 (SVPHGALVEAACAFCFHLTLL) form a helical membrane-spanning segment. At 167–178 (HLRHSPPAYSGP) the chain is on the cytoplasmic side. A helical transmembrane segment spans residues 179–199 (AVALLVTVTAYTAGPFTSAFF). Residues 195-206 (TSAFFNPALAAS) constitute an intramembrane region (discontinuously helical). An NPA 2 motif is present at residues 200–202 (NPA). The Extracellular segment spans residues 200–215 (NPALAASVTFACSGHT). A helical membrane pass occupies residues 216–236 (LLEYVQVYWLGPLTGMVLAVL). Residues 237–295 (LHQGRLPHLFQRNLFYGQKNKYRAPRGKPAPASGDTQTPAKGSSVREPGRSGVEGPHSS) lie on the Cytoplasmic side of the membrane. The interval 257–295 (KYRAPRGKPAPASGDTQTPAKGSSVREPGRSGVEGPHSS) is disordered.

It belongs to the MIP/aquaporin (TC 1.A.8) family. AQP11/AQP12 subfamily. As to quaternary structure, homotetramer; each monomer provides an independent water pore. As to expression, restricted to the pancreas.

It is found in the membrane. It catalyses the reaction H2O(in) = H2O(out). Its function is as follows. Putative aquaporin. Could form homotetrameric transmembrane channels, with each monomer independently mediating water transport across the plasma membrane along its osmotic gradient. The sequence is that of Putative aquaporin-12A from Homo sapiens (Human).